Consider the following 78-residue polypeptide: D-alanyl carrier protein (78 aa).

Residues 1–78 (MAFRENVLEI…MIITQLEALK (78 aa)) form the Carrier domain. An O-(pantetheine 4'-phosphoryl)serine modification is found at Ser-36.

The protein belongs to the DltC family. 4'-phosphopantetheine is transferred from CoA to a specific serine of apo-DCP.

It localises to the cytoplasm. Its pathway is cell wall biogenesis; lipoteichoic acid biosynthesis. Carrier protein involved in the D-alanylation of lipoteichoic acid (LTA). The loading of thioester-linked D-alanine onto DltC is catalyzed by D-alanine--D-alanyl carrier protein ligase DltA. The DltC-carried D-alanyl group is further transferred to cell membrane phosphatidylglycerol (PG) by forming an ester bond, probably catalyzed by DltD. D-alanylation of LTA plays an important role in modulating the properties of the cell wall in Gram-positive bacteria, influencing the net charge of the cell wall. The polypeptide is D-alanyl carrier protein (Listeria welshimeri serovar 6b (strain ATCC 35897 / DSM 20650 / CCUG 15529 / CIP 8149 / NCTC 11857 / SLCC 5334 / V8)).